The following is a 342-amino-acid chain: Holliday junction branch migration complex subunit RuvB (342 aa).

A large ATPase domain (RuvB-L) region spans residues 1–179 (MTSILSPEKS…FGIPMRLNFY (179 aa)). Residues leucine 18, arginine 19, glycine 60, lysine 63, threonine 64, threonine 65, 126–128 (EDF), arginine 169, tyrosine 179, and arginine 216 each bind ATP. A Mg(2+)-binding site is contributed by threonine 64. Positions 180 to 250 (NTEELKKVLN…IANFGLNRLE (71 aa)) are small ATPAse domain (RuvB-S). Residues 253 to 342 (IIGLDSNDYR…HQFNIFNDNE (90 aa)) form a head domain (RuvB-H) region. The DNA site is built by arginine 289, arginine 308, and arginine 313.

Belongs to the RuvB family. In terms of assembly, homohexamer. Forms an RuvA(8)-RuvB(12)-Holliday junction (HJ) complex. HJ DNA is sandwiched between 2 RuvA tetramers; dsDNA enters through RuvA and exits via RuvB. An RuvB hexamer assembles on each DNA strand where it exits the tetramer. Each RuvB hexamer is contacted by two RuvA subunits (via domain III) on 2 adjacent RuvB subunits; this complex drives branch migration. In the full resolvosome a probable DNA-RuvA(4)-RuvB(12)-RuvC(2) complex forms which resolves the HJ.

It localises to the cytoplasm. It catalyses the reaction ATP + H2O = ADP + phosphate + H(+). Functionally, the RuvA-RuvB-RuvC complex processes Holliday junction (HJ) DNA during genetic recombination and DNA repair, while the RuvA-RuvB complex plays an important role in the rescue of blocked DNA replication forks via replication fork reversal (RFR). RuvA specifically binds to HJ cruciform DNA, conferring on it an open structure. The RuvB hexamer acts as an ATP-dependent pump, pulling dsDNA into and through the RuvAB complex. RuvB forms 2 homohexamers on either side of HJ DNA bound by 1 or 2 RuvA tetramers; 4 subunits per hexamer contact DNA at a time. Coordinated motions by a converter formed by DNA-disengaged RuvB subunits stimulates ATP hydrolysis and nucleotide exchange. Immobilization of the converter enables RuvB to convert the ATP-contained energy into a lever motion, pulling 2 nucleotides of DNA out of the RuvA tetramer per ATP hydrolyzed, thus driving DNA branch migration. The RuvB motors rotate together with the DNA substrate, which together with the progressing nucleotide cycle form the mechanistic basis for DNA recombination by continuous HJ branch migration. Branch migration allows RuvC to scan DNA until it finds its consensus sequence, where it cleaves and resolves cruciform DNA. The polypeptide is Holliday junction branch migration complex subunit RuvB (Rickettsia bellii (strain RML369-C)).